Here is a 178-residue protein sequence, read N- to C-terminus: ATP synthase subunit b (178 aa).

The chain crosses the membrane as a helical span at residues 19-39 (ITGIGFVILLFIAIKYIVPAF).

Belongs to the ATPase B chain family. F-type ATPases have 2 components, F(1) - the catalytic core - and F(0) - the membrane proton channel. F(1) has five subunits: alpha(3), beta(3), gamma(1), delta(1), epsilon(1). F(0) has three main subunits: a(1), b(2) and c(10-14). The alpha and beta chains form an alternating ring which encloses part of the gamma chain. F(1) is attached to F(0) by a central stalk formed by the gamma and epsilon chains, while a peripheral stalk is formed by the delta and b chains.

Its subcellular location is the cell membrane. F(1)F(0) ATP synthase produces ATP from ADP in the presence of a proton or sodium gradient. F-type ATPases consist of two structural domains, F(1) containing the extramembraneous catalytic core and F(0) containing the membrane proton channel, linked together by a central stalk and a peripheral stalk. During catalysis, ATP synthesis in the catalytic domain of F(1) is coupled via a rotary mechanism of the central stalk subunits to proton translocation. Its function is as follows. Component of the F(0) channel, it forms part of the peripheral stalk, linking F(1) to F(0). This chain is ATP synthase subunit b, found in Kocuria rhizophila (strain ATCC 9341 / DSM 348 / NBRC 103217 / DC2201).